The sequence spans 360 residues: N6-Methyl-AMP deaminase (360 aa).

Residues histidine 23 and histidine 25 each coordinate Zn(2+). Residues histidine 25, asparagine 27, histidine 73, 105-108 (STPR), aspartate 147, and glycine 180 contribute to the N(6)-methyl-AMP site. Histidine 207 lines the Zn(2+) pocket. Residues glutamate 210, aspartate 292, and aspartate 293 each contribute to the N(6)-methyl-AMP site. The active-site Proton donor is the glutamate 210. Aspartate 292 is a Zn(2+) binding site.

The protein belongs to the metallo-dependent hydrolases superfamily. Adenosine and AMP deaminases family. Monomer. Zn(2+) serves as cofactor.

The enzyme catalyses N(6)-methyl-AMP + H2O + H(+) = IMP + methylamine. Catalyzes the hydrolysis of the free cytosolic methylated adenosine nucleotide N(6)-methyl-AMP (N6-mAMP) to produce inositol monophosphate (IMP) and methylamine. Is required for the catabolism of cytosolic N6-mAMP, which is derived from the degradation of mRNA containing N6-methylated adenine (m6A). This Mus musculus (Mouse) protein is N6-Methyl-AMP deaminase (Mapda).